A 561-amino-acid chain; its full sequence is Cation diffusion facilitator family protein 1 (561 aa).

Residues 1–20 are compositionally biased toward basic and acidic residues; it reads MEVTMEDRSVKADKADRDDN. A disordered region spans residues 1–26; sequence MEVTMEDRSVKADKADRDDNNTTSTE. Residues 1–112 are Cytoplasmic-facing; it reads MEVTMEDRSV…SESVKGVSRS (112 aa). A helical transmembrane segment spans residues 113-133; the sequence is LIIQIGMTVIFCALEFITGVV. The Extracellular portion of the chain corresponds to 134–136; sequence CSS. Residues 137–157 form a helical membrane-spanning segment; sequence IAMLADSYHMAADVMALIVAF. The Cytoplasmic portion of the chain corresponds to 158–176; sequence TCIKIATRPSTRLGYGWVR. Residues 177–197 traverse the membrane as a helical segment; sequence AETLGGFFNGIFMCTVCVLVF. Residues 198 to 215 are Extracellular-facing; it reads QEAVGRIINVHMITHPLQ. Residues 216–236 form a helical membrane-spanning segment; the sequence is VLVIGFIGLLINLFGMFNLSG. Residues 237-391 lie on the Cytoplasmic side of the membrane; the sequence is HGHSHGGGSH…NVNIHGVWLH (155 aa). Residues 240 to 304 form a disordered region; that stretch reads SHGGGSHGHS…HTRLNGKFRS (65 aa). The interval 246-270 is 6 X 2 AA approximate repeats of H-G; it reads HGHSHGGSHGHSHNNKKTKKNDGHG. A compositionally biased stretch (basic residues) spans 247–264; it reads GHSHGGSHGHSHNNKKTK. The helical transmembrane segment at 392–412 threads the bilayer; it reads LLSDAFGSVIVMISAGFVYFL. Residues 413–420 are Extracellular-facing; the sequence is PTWKIAAY. A helical transmembrane segment spans residues 421–441; the sequence is LDPILSISLASIMGFTAVVLV. The Cytoplasmic segment spans residues 442 to 561; the sequence is KTSGEKLLKQ…SVSTENEITE (120 aa).

The protein belongs to the cation diffusion facilitator (CDF) transporter (TC 2.A.4) family. SLC30A subfamily. Interacts with lin-45 in a zinc-dependent manner. As to expression, expressed in intestinal cells. Expressed in the vulva.

It localises to the basolateral cell membrane. Involved in the regulation of Pn.p cell fate determination. Involved in zinc metabolism and the decrease of the cytosolic zinc concentration which is thought to modulate Ras signaling. Involved in zinc transport from the intestinal lumen to the pseudocoelum. The polypeptide is Cation diffusion facilitator family protein 1 (cdf-1) (Caenorhabditis elegans).